The following is a 469-amino-acid chain: Cytosolic beta-glucosidase (469 aa).

Substrate-binding residues include Q17, H120, and N164. E165 serves as the catalytic Proton donor. Position 309 (Y309) interacts with substrate. Residue E373 is the Nucleophile of the active site. Substrate contacts are provided by residues W417 and 424 to 425 (EW).

It belongs to the glycosyl hydrolase 1 family. Klotho subfamily. Post-translationally, the N-terminus is blocked. As to expression, present in hepatocytes (at protein level).

The protein localises to the cytoplasm. Its subcellular location is the cytosol. It carries out the reaction Hydrolysis of terminal, non-reducing beta-D-glucosyl residues with release of beta-D-glucose.. The enzyme catalyses a beta-D-glucosyl-(1&lt;-&gt;1')-N-acylsphing-4-enine + H2O = an N-acylsphing-4-enine + D-glucose. The catalysed reaction is a beta-D-galactosyl-(1&lt;-&gt;1')-N-acylsphing-4-enine + H2O = an N-acylsphing-4-enine + D-galactose. It catalyses the reaction beta-D-glucosyl-(1&lt;-&gt;1)-sphing-4-enine + H2O = sphing-4-enine + D-glucose. It carries out the reaction beta-D-glucosyl-(1&lt;-&gt;1)-N-octadecanoylsphing-4-enine + H2O = N-octadecanoylsphing-4-enine + D-glucose. The enzyme catalyses beta-D-galactosyl-(1&lt;-&gt;1)-sphing-4-enine + H2O = sphing-4-enine + D-galactose. The catalysed reaction is beta-D-galactosyl-(1&lt;-&gt;1')-N-octadecanoylsphing-4-enine + H2O = N-octadecanoylsphing-4-enine + D-galactose. It catalyses the reaction a beta-D-xylosyl-(1&lt;-&gt;1')-N-acylsphing-4-enine + cholesterol = cholesteryl 3-beta-D-xyloside + an N-acylsphing-4-enine. With respect to regulation, inhibited by 2,4-dinitrophenyl-2-fluoro-2-deoxy-beta-D-glucopyranoside. Neutral cytosolic beta-glycosidase with a broad substrate specificity that could play a role in the catabolism of glycosylceramides. Has a significant glucosylceramidase activity in vitro. However, that activity is relatively low and its significance in vivo is not clear. Hydrolyzes galactosylceramide/GalCer, glucosylsphingosine/GlcSph and galactosylsphingosine/GalSph. However, the in vivo relevance of these activities is unclear. It can also hydrolyze a broad variety of dietary glycosides including phytoestrogens, flavonols, flavones, flavanones and cyanogens in vitro and could therefore play a role in the metabolism of xenobiotics. Possesses transxylosylase activity in vitro using xylosylated ceramides/XylCers (such as beta-D-xylosyl-(1&lt;-&gt;1')-N-acylsphing-4-enine) as xylosyl donors and cholesterol as acceptor. Could also play a role in the catabolism of cytosolic sialyl free N-glycans. This is Cytosolic beta-glucosidase from Cavia porcellus (Guinea pig).